A 444-amino-acid chain; its full sequence is tRNA modification GTPase MnmE (444 aa).

(6S)-5-formyl-5,6,7,8-tetrahydrofolate is bound by residues R21, E79, and K118. A TrmE-type G domain is found at 215-365 (GLNVVIVGKP…LVNEIKTNLK (151 aa)). N225 provides a ligand contact to K(+). Residues 225 to 230 (NVGKSS), 244 to 250 (SDIKGTT), and 269 to 272 (DTAG) each bind GTP. A Mg(2+)-binding site is contributed by S229. S244, I246, and T249 together coordinate K(+). T250 lines the Mg(2+) pocket. Position 444 (K444) interacts with (6S)-5-formyl-5,6,7,8-tetrahydrofolate.

It belongs to the TRAFAC class TrmE-Era-EngA-EngB-Septin-like GTPase superfamily. TrmE GTPase family. Homodimer. Heterotetramer of two MnmE and two MnmG subunits. K(+) serves as cofactor.

It localises to the cytoplasm. Its function is as follows. Exhibits a very high intrinsic GTPase hydrolysis rate. Involved in the addition of a carboxymethylaminomethyl (cmnm) group at the wobble position (U34) of certain tRNAs, forming tRNA-cmnm(5)s(2)U34. The protein is tRNA modification GTPase MnmE of Malacoplasma penetrans (strain HF-2) (Mycoplasma penetrans).